Reading from the N-terminus, the 592-residue chain is Protein kinase C zeta type (592 aa).

A PB1 domain is found at 15-98 (RVRLKAHYGG…EVLIIHVFPS (84 aa)). The segment at 79–145 (AFRLACQGRD…KRFNRRAYCG (67 aa)) is interaction with SQSTM1. Residues 130–180 (GHLFQAKRFNRRAYCGQCSERIWGLARQGYRCINCKLLVHKRCHVLVPLTC) form a Phorbol-ester/DAG-type zinc finger. A Protein kinase domain is found at 252–518 (FDLIRVIGRG…FSDIKSHAFF (267 aa)). Residues 258-266 (IGRGSYAKV) and Lys281 contribute to the ATP site. The active-site Proton acceptor is Asp376. Position 410 is a phosphothreonine; by PDPK1 and PI3K (Thr410). Residues 519-590 (RSIDWDLLEK…INPLLLSAEE (72 aa)) form the AGC-kinase C-terminal domain. Thr560 bears the Phosphothreonine mark. Ser591 is subject to Phosphoserine.

Belongs to the protein kinase superfamily. AGC Ser/Thr protein kinase family. PKC subfamily. As to quaternary structure, interacts with PARD6A, PARD6B and PARD6G. Part of a complex with PARD3, PARD6A or PARD6B or PARD6G and CDC42 or RAC1. Interacts with ADAP1/CENTA1. Forms a ternary complex with SQSTM1 and KCNAB2. Forms another ternary complex with SQSTM1 and GABRR3. Forms a complex with SQSTM1 and MAP2K5. Interacts (via the protein kinase domain) with WWC1. Forms a tripartite complex with WWC1 and DDR1, but predominantly in the absence of collagen. Component of the Par polarity complex, composed of at least phosphorylated PRKCZ, PARD3 and TIAM1. Interacts with PDPK1 (via N-terminal region). Interacts with WDFY2 (via WD repeats 1-3). Interacts with VAMP2. Forms a complex with WDFY2 and VAMP2. Interacts with APPL1. Interacts with WWC1, WWC2 and WWC3. In terms of processing, CDH5 is required for its phosphorylation at Thr-410. Phosphorylated by protein kinase PDPK1; phosphorylation is inhibited by the apoptotic C-terminal cleavage product of PKN2. Phosphorylation at Thr-410 by PI3K activates the kinase. Isoform 1: In brain, expressed in hippocampus, neocortex and cerebellum (at protein level). Also expressed in lung, liver, kidney, testis and to a lesser extent in pancreas, intestine and skin (at protein level). Isoform 2: Specifically expressed in brain where it localizes to the hippocampus, neocortex and cerebellum (at protein level).

It is found in the cytoplasm. Its subcellular location is the endosome. It localises to the cell junction. The protein localises to the membrane. The enzyme catalyses L-seryl-[protein] + ATP = O-phospho-L-seryl-[protein] + ADP + H(+). It catalyses the reaction L-threonyl-[protein] + ATP = O-phospho-L-threonyl-[protein] + ADP + H(+). Its activity is regulated as follows. Atypical PKCs (PRKCI and PRKCZ) exhibit an elevated basal enzymatic activity (that may be due to the interaction with SMG1 or SQSTM1) and are not regulated by diacylglycerol, phosphatidylserine, phorbol esters or calcium ions. Two specific sites, Thr-410 (activation loop of the kinase domain) and Thr-560 (turn motif), need to be phosphorylated for its full activation. Phosphatidylinositol 3,4,5-trisphosphate might be a physiological activator. Isoform 2: Constitutively active. Functionally, calcium- and diacylglycerol-independent serine/threonine-protein kinase that functions in phosphatidylinositol 3-kinase (PI3K) pathway and mitogen-activated protein (MAP) kinase cascade, and is involved in NF-kappa-B activation, mitogenic signaling, cell proliferation, cell polarity, inflammatory response and maintenance of long-term potentiation (LTP). Upon lipopolysaccharide (LPS) treatment in macrophages, or following mitogenic stimuli, functions downstream of PI3K to activate MAP2K1/MEK1-MAPK1/ERK2 signaling cascade independently of RAF1 activation. Required for insulin-dependent activation of AKT3, but may function as an adapter rather than a direct activator. Upon insulin treatment may act as a downstream effector of PI3K and contribute to the activation of translocation of the glucose transporter SLC2A4/GLUT4 and subsequent glucose transport in adipocytes. In EGF-induced cells, binds and activates MAP2K5/MEK5-MAPK7/ERK5 independently of its kinase activity and can activate JUN promoter through MEF2C. Through binding with SQSTM1/p62, functions in interleukin-1 signaling and activation of NF-kappa-B with the specific adapters RIPK1 and TRAF6. Participates in TNF-dependent transactivation of NF-kappa-B by phosphorylating and activating IKBKB kinase, which in turn leads to the degradation of NF-kappa-B inhibitors. In migrating astrocytes, forms a cytoplasmic complex with PARD6A and is recruited by CDC42 to function in the establishment of cell polarity along with the microtubule motor and dynein. In association with FEZ1, stimulates neuronal differentiation in PC12 cells. In the inflammatory response, is required for the T-helper 2 (Th2) differentiation process, including interleukin production, efficient activation of JAK1 and the subsequent phosphorylation and nuclear translocation of STAT6. May be involved in development of allergic airway inflammation (asthma), a process dependent on Th2 immune response. In the NF-kappa-B-mediated inflammatory response, can relieve SETD6-dependent repression of NF-kappa-B target genes by phosphorylating the RELA subunit at 'Ser-311'. Phosphorylates VAMP2 in vitro. Phosphorylates and activates LRRK1, which phosphorylates RAB proteins involved in intracellular trafficking. In terms of biological role, involved in late synaptic long term potentiation phase in CA1 hippocampal cells and long term memory maintenance. In Rattus norvegicus (Rat), this protein is Protein kinase C zeta type (Prkcz).